We begin with the raw amino-acid sequence, 285 residues long: N(G),N(G)-dimethylarginine dimethylaminohydrolase 1 (285 aa).

The residue at position 2 (A2) is an N-acetylalanine. Substrate contacts are provided by L30, D73, E78, D79, R98, and R145. H173 serves as the catalytic Proton donor. The residue at position 222 (C222) is an S-nitrosocysteine. V268 provides a ligand contact to substrate. C274 carries the post-translational modification S-nitrosocysteine. C274 serves as the catalytic Nucleophile. C274 provides a ligand contact to Zn(2+).

As to quaternary structure, monomer. As to expression, widely distributed, highest concentrations found in brain, brain cortex and kidney (at protein level).

The catalysed reaction is N(omega),N(omega)-dimethyl-L-arginine + H2O = dimethylamine + L-citrulline. It catalyses the reaction N(omega)-methyl-L-arginine + H2O = L-citrulline + methylamine. With respect to regulation, copurifies with a tightly bound zinc ion. Activated by release of zinc. His and other agents that promote the release of bound zinc ions activate the enzyme (in vitro). Inhibited by S-nitrosylation. Zinc protects the protein against S-nitrosylation. Hydrolyzes N(G),N(G)-dimethyl-L-arginine (ADMA) and N(G)-monomethyl-L-arginine (MMA) which act as inhibitors of NOS. Has therefore a role in the regulation of nitric oxide generation. This Bos taurus (Bovine) protein is N(G),N(G)-dimethylarginine dimethylaminohydrolase 1 (DDAH1).